The primary structure comprises 311 residues: Pyrimidine-specific ribonucleoside hydrolase RihA (311 aa).

Residue H240 is part of the active site.

Belongs to the IUNH family. RihA subfamily.

Functionally, hydrolyzes cytidine or uridine to ribose and cytosine or uracil, respectively. This is Pyrimidine-specific ribonucleoside hydrolase RihA from Salmonella schwarzengrund (strain CVM19633).